The sequence spans 1375 residues: DNA-directed RNA polymerase subunit beta (1375 aa).

This sequence belongs to the RNA polymerase beta chain family. The RNAP catalytic core consists of 2 alpha, 1 beta, 1 beta' and 1 omega subunit. When a sigma factor is associated with the core the holoenzyme is formed, which can initiate transcription.

It carries out the reaction RNA(n) + a ribonucleoside 5'-triphosphate = RNA(n+1) + diphosphate. DNA-dependent RNA polymerase catalyzes the transcription of DNA into RNA using the four ribonucleoside triphosphates as substrates. The sequence is that of DNA-directed RNA polymerase subunit beta from Campylobacter jejuni subsp. jejuni serotype O:6 (strain 81116 / NCTC 11828).